Here is a 243-residue protein sequence, read N- to C-terminus: Uridylate kinase (243 aa).

Residue 15–18 (KLSG) participates in ATP binding. The tract at residues 23 to 28 (GEEGFG) is involved in allosteric activation by GTP. Residue G57 participates in UMP binding. The ATP site is built by G58 and R62. UMP is bound by residues D77 and 138 to 145 (TGNPFFTT). 3 residues coordinate ATP: T165, F171, and D174.

Belongs to the UMP kinase family. As to quaternary structure, homohexamer.

It localises to the cytoplasm. The catalysed reaction is UMP + ATP = UDP + ADP. Its pathway is pyrimidine metabolism; CTP biosynthesis via de novo pathway; UDP from UMP (UMPK route): step 1/1. Allosterically activated by GTP. Inhibited by UTP. Its function is as follows. Catalyzes the reversible phosphorylation of UMP to UDP. The protein is Uridylate kinase of Vibrio campbellii (strain ATCC BAA-1116).